We begin with the raw amino-acid sequence, 602 residues long: Elongation factor 4 (602 aa).

One can recognise a tr-type G domain in the interval 5 to 187; that stretch reads DHIRNFSIIA…ALVKRIPAPK (183 aa). Residues 17 to 22 and 134 to 137 contribute to the GTP site; these read DHGKST and NKID.

The protein belongs to the TRAFAC class translation factor GTPase superfamily. Classic translation factor GTPase family. LepA subfamily.

It localises to the cell inner membrane. The enzyme catalyses GTP + H2O = GDP + phosphate + H(+). In terms of biological role, required for accurate and efficient protein synthesis under certain stress conditions. May act as a fidelity factor of the translation reaction, by catalyzing a one-codon backward translocation of tRNAs on improperly translocated ribosomes. Back-translocation proceeds from a post-translocation (POST) complex to a pre-translocation (PRE) complex, thus giving elongation factor G a second chance to translocate the tRNAs correctly. Binds to ribosomes in a GTP-dependent manner. This Zymomonas mobilis subsp. mobilis (strain ATCC 31821 / ZM4 / CP4) protein is Elongation factor 4.